A 346-amino-acid chain; its full sequence is DNA-directed RNA polymerases I and III subunit RPAC1 (346 aa).

Alanine 2 is modified (N-acetylalanine). The residue at position 4 (serine 4) is a Phosphoserine.

Belongs to the archaeal Rpo3/eukaryotic RPB3 RNA polymerase subunit family. In terms of assembly, component of the RNA polymerase I and RNA polymerase III complexes consisting of at least 13 and 17 subunits, respectively. Pol I complex consists of a ten-subunit catalytic core composed of POLR1A/RPA1, POLR1B/RPA2, POLR1C/RPAC1, POLR1D/RPAC2, POLR1H/RPA12, POLR2E/RPABC1, POLR2F/RPABC2, POLR2H/RPABC3, POLR2K/RPABC4 and POLR2L/RPABC5; a mobile stalk subunit POLR1F/RPA43 protruding from the core and additional subunits homologous to general transcription factors POLR1E/RPA49 and POLR1G/RPA34. Part of Pol I pre-initiation complex (PIC), in which Pol I core assembles with RRN3 and promoter-bound UTBF and SL1/TIF-IB complex. Pol III complex consists of a ten-subunit catalytic core composed of POLR3A/RPC1, POLR3B/RPC2, POLR1C/RPAC1, POLR1D/RPAC2, POLR3K/RPC10, POLR2E/RPABC1, POLR2F/RPABC2, POLR2H/RPABC3, POLR2K/RPABC4 and POLR2L/RPABC5; a mobile stalk composed of two subunits POLR3H/RPC8 and CRCP/RPC9, protruding from the core and functioning primarily in transcription initiation; and additional subunits homologous to general transcription factors of the RNA polymerase II machinery, POLR3C/RPC3-POLR3F/RPC6-POLR3G/RPC7 heterotrimer required for transcription initiation and POLR3D/RPC4-POLR3E/RPC5 heterodimer involved in both transcription initiation and termination.

The protein localises to the nucleus. It localises to the nucleolus. The protein resides in the cytoplasm. It is found in the cytosol. DNA-dependent RNA polymerase catalyzes the transcription of DNA into RNA using the four ribonucleoside triphosphates as substrates. Common component of RNA polymerases I and III which synthesize ribosomal RNA precursors and short non-coding RNAs including 5S rRNA, snRNAs, tRNAs and miRNAs, respectively. POLR1C/RPAC1 is part of the polymerase core and may function as a clamp element that moves to open and close the cleft. The protein is DNA-directed RNA polymerases I and III subunit RPAC1 of Homo sapiens (Human).